A 382-amino-acid polypeptide reads, in one-letter code: Alpha-2B adrenergic receptor (382 aa).

Residues 1 to 25 form a helical membrane-spanning segment; it reads AIAAVITFLILFTIFGNALVILAVL. The Cytoplasmic segment spans residues 26 to 36; it reads TSRSLRAPQNL. A helical membrane pass occupies residues 37–62; the sequence is FLVSLAAADILVATLIIPFSLANELL. Residues 63–72 are Extracellular-facing; the sequence is GYWYFRHTWC. A disulfide bridge links Cys-72 with Cys-151. A helical membrane pass occupies residues 73-95; it reads EVYLALDVLFCTSSIVHLCAISL. The Cytoplasmic portion of the chain corresponds to 96–117; it reads DRYWSVSRALEYNSKRTPRRIK. A helical transmembrane segment spans residues 118–140; it reads GIILTVWLIAAFISLPPLIYKGD. The Extracellular segment spans residues 141–156; it reads KGKKPGGRPQCKLNEE. A helical transmembrane segment spans residues 157-180; it reads AWYILSSSIGSFFAPCLIMILVYL. The Cytoplasmic segment spans residues 181–346; it reads RIYLIAKRRN…MNREKRFTFV (166 aa). The disordered stretch occupies residues 192 to 305; it reads QGPHGKQAPG…QGTPNFQPSQ (114 aa). Residues 271–284 are compositionally biased toward acidic residues; that stretch reads EEEEEEEEEEEEEC. The span at 291-305 shows a compositional bias: polar residues; the sequence is TSSSLQGTPNFQPSQ. The helical transmembrane segment at 347–370 threads the bilayer; it reads LAVVIGVFVLCWFPFFFSYSLGAI. The Extracellular segment spans residues 371–379; the sequence is CPQHCKVPH. The helical transmembrane segment at 380–382 threads the bilayer; it reads GLF.

Belongs to the G-protein coupled receptor 1 family. Adrenergic receptor subfamily. ADRA2B sub-subfamily. In terms of assembly, interacts with RAB26. Interacts with PPP1R9B. Interacts with GGA1, GGA2 and GGA3.

It localises to the cell membrane. Functionally, alpha-2 adrenergic receptors mediate the catecholamine-induced inhibition of adenylate cyclase through the action of G proteins. The protein is Alpha-2B adrenergic receptor (ADRA2B) of Didelphis virginiana (North American opossum).